Reading from the N-terminus, the 275-residue chain is Large ribosomal subunit protein uL2 (275 aa).

The interval 224-275 (AMNPVDHPHGGGEGKAPIGHPGPLTPWGKPALGYKTRKKGKASDKFIIRRRK) is disordered. Over residues 264-275 (KASDKFIIRRRK) the composition is skewed to basic and acidic residues.

The protein belongs to the universal ribosomal protein uL2 family. Part of the 50S ribosomal subunit. Forms a bridge to the 30S subunit in the 70S ribosome.

Its function is as follows. One of the primary rRNA binding proteins. Required for association of the 30S and 50S subunits to form the 70S ribosome, for tRNA binding and peptide bond formation. It has been suggested to have peptidyltransferase activity; this is somewhat controversial. Makes several contacts with the 16S rRNA in the 70S ribosome. The sequence is that of Large ribosomal subunit protein uL2 from Thermoanaerobacter pseudethanolicus (strain ATCC 33223 / 39E) (Clostridium thermohydrosulfuricum).